Here is a 263-residue protein sequence, read N- to C-terminus: 4-hydroxy-tetrahydrodipicolinate reductase (263 aa).

NAD(+) contacts are provided by residues 7–12, 96–98, and 122–125; these read GFKGRM, GTT, and APNF. Histidine 152 acts as the Proton donor/acceptor in catalysis. Histidine 153 contacts (S)-2,3,4,5-tetrahydrodipicolinate. Lysine 156 (proton donor) is an active-site residue. 162-163 is a (S)-2,3,4,5-tetrahydrodipicolinate binding site; that stretch reads GT.

Belongs to the DapB family.

The protein resides in the cytoplasm. The enzyme catalyses (S)-2,3,4,5-tetrahydrodipicolinate + NAD(+) + H2O = (2S,4S)-4-hydroxy-2,3,4,5-tetrahydrodipicolinate + NADH + H(+). It catalyses the reaction (S)-2,3,4,5-tetrahydrodipicolinate + NADP(+) + H2O = (2S,4S)-4-hydroxy-2,3,4,5-tetrahydrodipicolinate + NADPH + H(+). It participates in amino-acid biosynthesis; L-lysine biosynthesis via DAP pathway; (S)-tetrahydrodipicolinate from L-aspartate: step 4/4. In terms of biological role, catalyzes the conversion of 4-hydroxy-tetrahydrodipicolinate (HTPA) to tetrahydrodipicolinate. This Listeria welshimeri serovar 6b (strain ATCC 35897 / DSM 20650 / CCUG 15529 / CIP 8149 / NCTC 11857 / SLCC 5334 / V8) protein is 4-hydroxy-tetrahydrodipicolinate reductase.